Reading from the N-terminus, the 889-residue chain is Disease resistance protein RPS5 (889 aa).

Glycine 2 carries N-myristoyl glycine lipidation. Cysteine 4 carries S-palmitoyl cysteine lipidation. A coiled-coil region spans residues 29 to 58 (IHNLSKNLASLQKAMRMLKARQYDVIRRLE). An NB-ARC domain is found at 140–444 (SEATPFADVD…SEGFINEKEG (305 aa)). 183–190 (GMGGVGKT) lines the ATP pocket. LRR repeat units lie at residues 518–539 (TVRK…HECA), 540–561 (ALTT…FFRC), 564–586 (HLVV…ISEL), 588–610 (SLRY…WTLK), 611–633 (KLIH…SNLW), and 634–656 (NLRT…KELQ).

Belongs to the disease resistance NB-LRR family. As to quaternary structure, in uninfected plants, interacts with PBS1 through the coiled coil domain. Homodimer.

Its subcellular location is the cell membrane. Disease resistance (R) protein that specifically recognizes the avrPphB type III effector avirulence protein from Pseudomonas syringae. Also confers resistance against Hyaloperonospora parasitica (downy mildew). Resistance proteins guard the plant against pathogens that contain an appropriate avirulence protein via an indirect interaction with this avirulence protein. That triggers a defense system including the hypersensitive response, which restricts the pathogen growth. Requires PBS1 to trigger the defense reaction against avrPphB. In case of infection by Pseudomonas syringae, AvrPphB triggers RPS5-mediated defense mechanism via the cleavage of PBS1, suggesting that the cleavage of PBS1 could trigger an exchange of ADP for ATP, thereby activating RPS5. May function as a fine-tuned sensor of alterations in the structure of the effector target PBS1. The protein is Disease resistance protein RPS5 (RPS5) of Arabidopsis thaliana (Mouse-ear cress).